Reading from the N-terminus, the 316-residue chain is MSDKLIRAIAKDGMIRIFATETTELVNEASKIHDCTPTAAAALGRMLTAGTMMGAMLKSDKEVVTLQINGGGMAKGVTVTAYSDCSVKGYIGNPHVDLPLNTENGKLNVGEAIGKNGGLTVIKDLGLKDPYVGQVPIYSGEIAEDLAYYFTASEQIPSAVALGVLVDRDHSIKKAGGFIIQLLPGADELLGDLLTYRLDEIPSLTTMLSEGKTIEEVIEFIFDGMDLKILEEETPKYKCDCSREKVERALLSIGYKDLKELYDEGKEEELKCHFCNKAYKFTKEDIGKLLEEKEKSIADEVSEEMKKAEEKEKNKK.

2 disulfides stabilise this stretch: Cys-239–Cys-241 and Cys-272–Cys-275.

This sequence belongs to the HSP33 family. In terms of processing, under oxidizing conditions two disulfide bonds are formed involving the reactive cysteines. Under reducing conditions zinc is bound to the reactive cysteines and the protein is inactive.

It is found in the cytoplasm. Functionally, redox regulated molecular chaperone. Protects both thermally unfolding and oxidatively damaged proteins from irreversible aggregation. Plays an important role in the bacterial defense system toward oxidative stress. The chain is 33 kDa chaperonin from Clostridium perfringens (strain SM101 / Type A).